Consider the following 263-residue polypeptide: Small ribosomal subunit protein uS3 (263 aa).

The 69-residue stretch at Ile40–Glu108 folds into the KH type-2 domain. Residues Lys224 to Glu263 are disordered. The segment covering Lys239–Asn248 has biased composition (basic and acidic residues). Residues Lys249–Glu263 are compositionally biased toward low complexity.

It belongs to the universal ribosomal protein uS3 family. In terms of assembly, part of the 30S ribosomal subunit. Forms a tight complex with proteins S10 and S14.

In terms of biological role, binds the lower part of the 30S subunit head. Binds mRNA in the 70S ribosome, positioning it for translation. This is Small ribosomal subunit protein uS3 from Mycoplasmoides gallisepticum (strain R(low / passage 15 / clone 2)) (Mycoplasma gallisepticum).